The following is a 135-amino-acid chain: RxLR effector protein Avh5 (135 aa).

A signal peptide spans 1–19 (MRLQFFLVMAVATLATISA). Positions 43 to 71 (RFLRTADTDIVYEPKVHNPGKKQVFIEDK) match the RxLR-dEER motif. Positions 81, 83, and 84 each coordinate a 1,2-diacyl-sn-glycero-3-phospho-(1D-myo-inositol-3-phosphate).

Belongs to the RxLR effector family.

It localises to the secreted. Its subcellular location is the host cell. Its function is as follows. Effector that suppresses plant defense responses during the early stages of pathogen infection. Suppresses cell death induced by effectors and PAMPs in plant hosts. The chain is RxLR effector protein Avh5 from Phytophthora sojae (Soybean stem and root rot agent).